We begin with the raw amino-acid sequence, 463 residues long: Elongation factor 1-alpha 2 (463 aa).

Position 2 is a n,N,N-trimethylglycine (G2). The tr-type G domain maps to 5–242; the sequence is KTHINIVVIG…DTILPPTRPT (238 aa). Residues 14–21 form a G1 region; sequence GHVDSGKS. GTP-binding residues include D17, S18, G19, K20, S21, and T22. D17 serves as a coordination point for Mg(2+). N6,N6,N6-trimethyllysine; alternate is present on K36. At K36 the chain carries N6,N6-dimethyllysine; alternate. K36 is modified (N6-methyllysine; alternate). K55 bears the N6,N6,N6-trimethyllysine mark. An N6,N6-dimethyllysine modification is found at K55. A G2 region spans residues 70 to 74; it reads GITID. Residue K79 is modified to N6,N6,N6-trimethyllysine. The interval 91–94 is G3; that stretch reads DAPG. Residues N153, K154, and D156 each contribute to the GTP site. A G4 region spans residues 153–156; it reads NKMD. S163 bears the Phosphoserine mark. K165 carries the post-translational modification N6,N6-dimethyllysine; alternate. K165 is subject to N6-methyllysine; alternate. N6,N6,N6-trimethyllysine; alternate; by EEF1AKMT3 is present on K165. An N6-acetyllysine modification is found at K179. GTP contacts are provided by S194, G195, and W196. The segment at 194 to 196 is G5; the sequence is SGW. Position 224 is a phosphoserine (S224). Position 239 is a phosphothreonine (T239). 2 positions are modified to 5-glutamyl glycerylphosphorylethanolamine: E301 and E374. N6-acetyllysine is present on K439. The interval 444–463 is disordered; that stretch reads KSGGAGKVTKSAQKAQKAGK.

Belongs to the TRAFAC class translation factor GTPase superfamily. Classic translation factor GTPase family. EF-Tu/EF-1A subfamily. In terms of assembly, homodimer; arranged in a 'head to tail' dimer configuration. Post-translationally, trimethylated at Lys-165 by EEF1AKMT3. Mono-, di-, and trimethylated at Lys-36 by EEF1AKMT4; trimethylated form is predominant. Methylation by EEF1AKMT4 contributes to the fine-tuning of translation rates for a subset of tRNAs. Trimethylated at the N-terminus and dimethylated at Lys-55 by METTL13.

Its subcellular location is the endoplasmic reticulum membrane. It catalyses the reaction GTP + H2O = GDP + phosphate + H(+). Functionally, translation elongation factor that catalyzes the GTP-dependent binding of aminoacyl-tRNA (aa-tRNA) to the A-site of ribosomes during the elongation phase of protein synthesis. Base pairing between the mRNA codon and the aa-tRNA anticodon promotes GTP hydrolysis, releasing the aa-tRNA from EEF1A1 and allowing its accommodation into the ribosome. The growing protein chain is subsequently transferred from the P-site peptidyl tRNA to the A-site aa-tRNA, extending it by one amino acid through ribosome-catalyzed peptide bond formation. The polypeptide is Elongation factor 1-alpha 2 (EEF1A2) (Bos taurus (Bovine)).